We begin with the raw amino-acid sequence, 272 residues long: ATP phosphoribosyltransferase regulatory subunit (272 aa).

Belongs to the class-II aminoacyl-tRNA synthetase family. HisZ subfamily. As to quaternary structure, heteromultimer composed of HisG and HisZ subunits.

It localises to the cytoplasm. It participates in amino-acid biosynthesis; L-histidine biosynthesis; L-histidine from 5-phospho-alpha-D-ribose 1-diphosphate: step 1/9. Required for the first step of histidine biosynthesis. May allow the feedback regulation of ATP phosphoribosyltransferase activity by histidine. This Staphylococcus aureus (strain USA300) protein is ATP phosphoribosyltransferase regulatory subunit.